The sequence spans 367 residues: D-alanine--D-alanine ligase (367 aa).

Residues 150-357 enclose the ATP-grasp domain; the sequence is KKLLTAAGLP…YPTLLATMVE (208 aa). Residue 178-233 coordinates ATP; sequence RERLGLPVFVKPSRGGSSIGVSRVTAWDALPAAIELARRHDPKVIVEAAIPGRELE. Positions 312, 324, and 326 each coordinate Mg(2+).

Belongs to the D-alanine--D-alanine ligase family. Mg(2+) serves as cofactor. Mn(2+) is required as a cofactor.

Its subcellular location is the cytoplasm. The enzyme catalyses 2 D-alanine + ATP = D-alanyl-D-alanine + ADP + phosphate + H(+). It functions in the pathway cell wall biogenesis; peptidoglycan biosynthesis. Its function is as follows. Cell wall formation. The sequence is that of D-alanine--D-alanine ligase from Mycolicibacterium vanbaalenii (strain DSM 7251 / JCM 13017 / BCRC 16820 / KCTC 9966 / NRRL B-24157 / PYR-1) (Mycobacterium vanbaalenii).